A 308-amino-acid chain; its full sequence is Aspartate carbamoyltransferase catalytic subunit (308 aa).

Carbamoyl phosphate is bound by residues R59 and T60. Position 87 (K87) interacts with L-aspartate. Carbamoyl phosphate is bound by residues R109, H139, and Q142. L-aspartate contacts are provided by R172 and R224. 2 residues coordinate carbamoyl phosphate: A265 and P266.

The protein belongs to the aspartate/ornithine carbamoyltransferase superfamily. ATCase family. In terms of assembly, heterododecamer (2C3:3R2) of six catalytic PyrB chains organized as two trimers (C3), and six regulatory PyrI chains organized as three dimers (R2).

The catalysed reaction is carbamoyl phosphate + L-aspartate = N-carbamoyl-L-aspartate + phosphate + H(+). It functions in the pathway pyrimidine metabolism; UMP biosynthesis via de novo pathway; (S)-dihydroorotate from bicarbonate: step 2/3. Catalyzes the condensation of carbamoyl phosphate and aspartate to form carbamoyl aspartate and inorganic phosphate, the committed step in the de novo pyrimidine nucleotide biosynthesis pathway. This Streptococcus thermophilus (strain ATCC BAA-491 / LMD-9) protein is Aspartate carbamoyltransferase catalytic subunit.